The primary structure comprises 488 residues: MDLMHRTLLTALGALSVVYALVKFSLGYWKRRGILHEKPKFLWGNIKGVVSGKRHAQDALQDIYTAYKGRAPFVGFYACLKPFILALDLKLVHQIIFTDAGHFTSRGLYSNPSGEPLSHNLLQLDGHKWRSLHAKSAEVFTPANMQKLLVRLSQISSRIQRDLGEKSLQTINISELVGAYNTDVMASMAFGLVGQDNVEFAKWTRNYWADFRMWQAYLALEFPLIARLLQYKSYAEPATAYFQKVALSQLQLHRRRDRQPLQTFLQLYSNAEKPLTDIEIAGQAFGFVLAGLGPLNATLAFCLYELARQPEVQDRTRLEINKALEEHGGQVTPECLRELRYTKQVLNETLRLHTPHPFLLRRATKEFEVPGSVFVIAKGNNVLIPTAAIHMDPGIYENPQRFYPERFEEQARRSRPAAAFLPFGDGLRGCIAARFAEQQLLVGLVALLRQHRYAPSAETSIPVEYDNRRLLLMPKSDIKLSVERVDKL.

Residue Cys-430 coordinates heme.

This sequence belongs to the cytochrome P450 family. Heme is required as a cofactor.

The protein resides in the endoplasmic reticulum membrane. The protein localises to the microsome membrane. Its function is as follows. May be involved in the metabolism of insect hormones and in the breakdown of synthetic insecticides. This is Probable cytochrome P450 6u1 (Cyp6u1) from Drosophila melanogaster (Fruit fly).